The chain runs to 372 residues: Chaperone protein DnaJ (372 aa).

Positions D5 to G69 constitute a J domain. The segment at G129–R211 adopts a CR-type zinc-finger fold. C142, C145, C159, C162, C185, C188, C199, and C202 together coordinate Zn(2+). 4 CXXCXGXG motif repeats span residues C142–G149, C159–G166, C185–G192, and C199–G206.

This sequence belongs to the DnaJ family. As to quaternary structure, homodimer. It depends on Zn(2+) as a cofactor.

Its subcellular location is the cytoplasm. In terms of biological role, participates actively in the response to hyperosmotic and heat shock by preventing the aggregation of stress-denatured proteins and by disaggregating proteins, also in an autonomous, DnaK-independent fashion. Unfolded proteins bind initially to DnaJ; upon interaction with the DnaJ-bound protein, DnaK hydrolyzes its bound ATP, resulting in the formation of a stable complex. GrpE releases ADP from DnaK; ATP binding to DnaK triggers the release of the substrate protein, thus completing the reaction cycle. Several rounds of ATP-dependent interactions between DnaJ, DnaK and GrpE are required for fully efficient folding. Also involved, together with DnaK and GrpE, in the DNA replication of plasmids through activation of initiation proteins. This chain is Chaperone protein DnaJ, found in Shouchella clausii (strain KSM-K16) (Alkalihalobacillus clausii).